The primary structure comprises 247 residues: Phosphoribosylaminoimidazole-succinocarboxamide synthase (247 aa).

This sequence belongs to the SAICAR synthetase family.

The catalysed reaction is 5-amino-1-(5-phospho-D-ribosyl)imidazole-4-carboxylate + L-aspartate + ATP = (2S)-2-[5-amino-1-(5-phospho-beta-D-ribosyl)imidazole-4-carboxamido]succinate + ADP + phosphate + 2 H(+). Its pathway is purine metabolism; IMP biosynthesis via de novo pathway; 5-amino-1-(5-phospho-D-ribosyl)imidazole-4-carboxamide from 5-amino-1-(5-phospho-D-ribosyl)imidazole-4-carboxylate: step 1/2. This is Phosphoribosylaminoimidazole-succinocarboxamide synthase from Prochlorococcus marinus (strain NATL1A).